A 288-amino-acid chain; its full sequence is Acetyl-coenzyme A carboxylase carboxyl transferase subunit beta (288 aa).

One can recognise a CoA carboxyltransferase N-terminal domain in the interval 30–288 (IMTKCPKCKK…KLHQEVKKDA (259 aa)). The Zn(2+) site is built by cysteine 34, cysteine 37, cysteine 53, and cysteine 56. Residues 34 to 56 (CPKCKKIMYTKELNENLNVCFNC) form a C4-type zinc finger.

This sequence belongs to the AccD/PCCB family. Acetyl-CoA carboxylase is a heterohexamer composed of biotin carboxyl carrier protein (AccB), biotin carboxylase (AccC) and two subunits each of ACCase subunit alpha (AccA) and ACCase subunit beta (AccD). Requires Zn(2+) as cofactor.

The protein resides in the cytoplasm. It carries out the reaction N(6)-carboxybiotinyl-L-lysyl-[protein] + acetyl-CoA = N(6)-biotinyl-L-lysyl-[protein] + malonyl-CoA. It participates in lipid metabolism; malonyl-CoA biosynthesis; malonyl-CoA from acetyl-CoA: step 1/1. Functionally, component of the acetyl coenzyme A carboxylase (ACC) complex. Biotin carboxylase (BC) catalyzes the carboxylation of biotin on its carrier protein (BCCP) and then the CO(2) group is transferred by the transcarboxylase to acetyl-CoA to form malonyl-CoA. This is Acetyl-coenzyme A carboxylase carboxyl transferase subunit beta from Staphylococcus haemolyticus (strain JCSC1435).